The sequence spans 115 residues: Disintegrin EC6 subunit alpha (115 aa).

An N-terminal signal peptide occupies residues methionine 1 to serine 20. Residues isoleucine 21–methionine 47 constitute a propeptide that is removed on maturation. Residues asparagine 48–lysine 112 form the Disintegrin domain. 4 cysteine pairs are disulfide-bonded: cysteine 53/cysteine 76, cysteine 67/cysteine 73, cysteine 72/cysteine 97, and cysteine 85/cysteine 104. A Cell attachment site; atypical (MLD) motif is present at residues methionine 89–aspartate 91.

This sequence belongs to the disintegrin family. Dimeric disintegrin subfamily. Heterodimer with subunit beta; disulfide-linked. Expressed by the venom gland.

It is found in the secreted. Potently inhibits adhesion of alpha-4/beta-1 (ITGA4/ITGB1) and alpha-9/beta-1 (ITGA9/ITGB1) integrins to VCAM1, and adhesion of alpha-5/beta-1 (ITGA5/ITGB1) integrin to fibronectin. Has a much less effect on alpha-IIb/beta-3 (ITGA2B/ITGB3) integrin. Also potently inhibits neutrophil migration across TNF-alpha-activated human umbilical endothelial cells. The sequence is that of Disintegrin EC6 subunit alpha from Echis carinatus sochureki (Saw-scaled viper).